The sequence spans 712 residues: NURS complex subunit red1 (712 aa).

The span at 1–22 (MSRSINLDELRKKALESKKKNE) shows a compositional bias: basic and acidic residues. 3 disordered regions span residues 1–71 (MSRS…DRFP), 107–195 (NKTF…TTNQ), and 323–348 (DDFS…GLTM). Positions 5–32 (INLDELRKKALESKKKNEEDESNDSDKE) form a coiled coil. A compositionally biased stretch (acidic residues) spans 23 to 42 (EDESNDSDKEDGEISEDDPV). Over residues 130–141 (SETSDSSNTSQS) the composition is skewed to low complexity. 2 stretches are compositionally biased toward polar residues: residues 178-193 (FLST…SKTT) and 327-348 (NSKI…GLTM). Residues 351–379 (SDYLALLRNKEEEIRRMTKLILRLESNKK) are a coiled coil. The interval 428–447 (PSISSSGASSSAATTNSDTT) is disordered. Residues 471–501 (AQIKKSEIDILNNLIEKEEGELTKYQTLVKS) adopt a coiled-coil conformation. Positions 545–567 (QADENSSQILSSKTSNAPNGTTE) are enriched in polar residues. The disordered stretch occupies residues 545 to 568 (QADENSSQILSSKTSNAPNGTTET). The segment at 618–639 (FCKYETTGGVCNDDHCEASHFR) adopts a C3H1-type zinc-finger fold.

As to quaternary structure, interacts with mmi1, pla1 and rrp6.

The protein resides in the nucleus. Its function is as follows. Promotes the exosome-mediated degradation of mRNAs containing a DSR (determinant of selective removal) signal sequence from mitotic cells. The protein is NURS complex subunit red1 of Schizosaccharomyces pombe (strain 972 / ATCC 24843) (Fission yeast).